We begin with the raw amino-acid sequence, 89 residues long: Small ribosomal subunit protein uS17 (89 aa).

The protein belongs to the universal ribosomal protein uS17 family. As to quaternary structure, part of the 30S ribosomal subunit.

Functionally, one of the primary rRNA binding proteins, it binds specifically to the 5'-end of 16S ribosomal RNA. The sequence is that of Small ribosomal subunit protein uS17 from Nocardia farcinica (strain IFM 10152).